The primary structure comprises 469 residues: Swarming motility regulation sensor protein RssA (469 aa).

2 consecutive transmembrane segments (helical) span residues Ile-12 to Tyr-32 and Val-167 to Ser-187. The region spanning Asp-245 to Tyr-459 is the Histidine kinase domain. Residue His-248 is modified to Phosphohistidine; by autocatalysis.

Its subcellular location is the cell inner membrane. It carries out the reaction ATP + protein L-histidine = ADP + protein N-phospho-L-histidine.. Its function is as follows. Member of the two-component regulatory system RssA/RssB involved in regulation of swarming motility which has been shown to be inhibited by saturated fatty acids. RssA/RssB regulates cellular fatty acid composition, hemolysin production and cell surface topography. RssA/RssB negatively regulates the activity of SlhBA. It can also act as a negative regulator for the control of the swarming initiation. This is Swarming motility regulation sensor protein RssA (rssA) from Serratia marcescens.